The primary structure comprises 194 residues: H-N-H endonuclease F-TflI (194 aa).

Its function is as follows. Endonuclease that cleaves only one strand of asymmetric DNA substrates thereby introducing interruptions into the template or coding strand. This is H-N-H endonuclease F-TflI from Escherichia coli (Enterobacteria phage T5).